A 46-amino-acid polypeptide reads, in one-letter code: Degradation enzyme regulation protein DegQ (46 aa).

The protein belongs to the DegQ family.

Its function is as follows. Stimulates the phosphotransfer from phospho-DegS to DegU. Affects protease and levansucrose production. In Bacillus subtilis (strain 168), this protein is Degradation enzyme regulation protein DegQ (degQ).